A 316-amino-acid polypeptide reads, in one-letter code: Lipooligosaccharide heptosyltransferase 2 (316 aa).

The protein belongs to the glycosyltransferase 9 family.

The catalysed reaction is an L-alpha-D-Hep-(1-&gt;5)-[alpha-Kdo-(2-&gt;4)]-alpha-Kdo-(2-&gt;6)-lipid A + ADP-L-glycero-beta-D-manno-heptose = an L-alpha-D-Hep-(1-&gt;3)-L-alpha-D-Hep-(1-&gt;5)-[alpha-Kdo-(2-&gt;4)]-alpha-Kdo-(2-&gt;6)-lipid A + ADP + H(+). It functions in the pathway bacterial outer membrane biogenesis; LOS core biosynthesis. Functionally, glycosyltransferase involved in the biosynthesis of the core oligosaccharide region of lipooligosaccharide (LOS). Catalyzes the addition of the second heptose unit to the heptosyl-Kdo2-lipid A module. This is Lipooligosaccharide heptosyltransferase 2 from Campylobacter jejuni subsp. jejuni serotype O:6 (strain 81116 / NCTC 11828).